The following is a 259-amino-acid chain: Acetylglutamate kinase (259 aa).

Residues 45–46, Arg67, and Asn159 each bind substrate; that span reads GG.

The protein belongs to the acetylglutamate kinase family. ArgB subfamily.

The protein resides in the cytoplasm. The enzyme catalyses N-acetyl-L-glutamate + ATP = N-acetyl-L-glutamyl 5-phosphate + ADP. It functions in the pathway amino-acid biosynthesis; L-arginine biosynthesis; N(2)-acetyl-L-ornithine from L-glutamate: step 2/4. Functionally, catalyzes the ATP-dependent phosphorylation of N-acetyl-L-glutamate. This chain is Acetylglutamate kinase, found in Aeromonas salmonicida (strain A449).